Here is an 88-residue protein sequence, read N- to C-terminus: Small ribosomal subunit protein bS20 (88 aa).

The disordered stretch occupies residues 1–20 (MANIKQQKKRNKTNEKRRLR).

This sequence belongs to the bacterial ribosomal protein bS20 family.

Binds directly to 16S ribosomal RNA. The chain is Small ribosomal subunit protein bS20 from Phytoplasma australiense.